A 337-amino-acid polypeptide reads, in one-letter code: Monoacylglycerol lipase abhd6-B (337 aa).

Residues 1–19 (MDIDVLNMFLVAGGTLLVP) are Extracellular-facing. Residues 20 to 42 (LLAFMTSFLLWPAALIRIYYWYW) traverse the membrane as a helical; Signal-anchor for type II membrane protein segment. Over 43–337 (RRALGMQVKY…QSTDNHKKHD (295 aa)) the chain is Cytoplasmic. Residues 72-313 (PSVLMLHGFS…CGHSVVMERP (242 aa)) enclose the AB hydrolase-1 domain. The active-site Nucleophile is the Ser-148. Active-site charge relay system residues include Asp-278 and His-306.

This sequence belongs to the AB hydrolase superfamily.

The protein localises to the late endosome membrane. It localises to the lysosome membrane. It is found in the mitochondrion membrane. The catalysed reaction is Hydrolyzes glycerol monoesters of long-chain fatty acids.. It carries out the reaction 1-octanoylglycerol + H2O = octanoate + glycerol + H(+). It catalyses the reaction 1-decanoylglycerol + H2O = decanoate + glycerol + H(+). The enzyme catalyses 1-dodecanoylglycerol + H2O = dodecanoate + glycerol + H(+). The catalysed reaction is 1-tetradecanoylglycerol + H2O = tetradecanoate + glycerol + H(+). It carries out the reaction 2-hexadecanoylglycerol + H2O = glycerol + hexadecanoate + H(+). It catalyses the reaction 2-(9Z-octadecenoyl)-glycerol + H2O = glycerol + (9Z)-octadecenoate + H(+). The enzyme catalyses 1-(9Z-octadecenoyl)-glycerol + H2O = glycerol + (9Z)-octadecenoate + H(+). The catalysed reaction is 2-(9Z,12Z-octadecadienoyl)-glycerol + H2O = (9Z,12Z)-octadecadienoate + glycerol + H(+). It carries out the reaction 2-(5Z,8Z,11Z,14Z-eicosatetraenoyl)-glycerol + H2O = glycerol + (5Z,8Z,11Z,14Z)-eicosatetraenoate + H(+). It catalyses the reaction 1-(5Z,8Z,11Z,14Z-eicosatetraenoyl)-glycerol + H2O = glycerol + (5Z,8Z,11Z,14Z)-eicosatetraenoate + H(+). The enzyme catalyses 1-(9Z,12Z-octadecadienoyl)-glycerol + H2O = (9Z,12Z)-octadecadienoate + glycerol + H(+). The catalysed reaction is 3-(9Z-octadecenoyl)-sn-glycero-1-phospho-(3'-(9Z-octadecenoyl)-1'-sn-glycerol) + H2O = 3-(9Z-octadecenoyl)-sn-glycero-1-phospho-(1'-sn-glycerol) + (9Z)-octadecenoate + H(+). It carries out the reaction (S,S)-2-(9Z-octadecenoyl)-sn-glycero-1-phospho-(2'-(9Z-octadecenoyl)-1'-sn-glycerol) + H2O = (S,S)-2-(9Z-octadecenoyl)-sn-glycero-1-phospho-(1'-sn-glycerol) + (9Z)-octadecenoate + H(+). It catalyses the reaction (R,R)-2-(9Z-octadecenoyl)-sn-glycero-3-phospho-(2'-(9Z-octadecenoyl)-3'-sn-glycerol) + H2O = (R,R)-2-(9Z-octadecenoyl)-sn-glycero-3-phospho-(3'-sn-glycerol) + (9Z)-octadecenoate + H(+). Its function is as follows. Lipase that preferentially hydrolysis medium-chain saturated monoacylglycerols including 2-arachidonoylglycerol. Through 2-arachidonoylglycerol degradation may regulate endocannabinoid signaling pathways. Also has a lysophosphatidyl lipase activity with a preference for lysophosphatidylglycerol among other lysophospholipids. Also able to degrade bis(monoacylglycero)phosphate (BMP) and constitutes the major enzyme for BMP catabolism. BMP, also known as lysobisphosphatidic acid, is enriched in late endosomes and lysosomes and plays a key role in the formation of intraluminal vesicles and in lipid sorting. The polypeptide is Monoacylglycerol lipase abhd6-B (abhd6-b) (Xenopus laevis (African clawed frog)).